A 360-amino-acid chain; its full sequence is Peptide chain release factor 1 (360 aa).

Glutamine 237 is modified (N5-methylglutamine).

The protein belongs to the prokaryotic/mitochondrial release factor family. Methylated by PrmC. Methylation increases the termination efficiency of RF1.

Its subcellular location is the cytoplasm. Peptide chain release factor 1 directs the termination of translation in response to the peptide chain termination codons UAG and UAA. The sequence is that of Peptide chain release factor 1 from Azotobacter vinelandii (strain DJ / ATCC BAA-1303).